Here is a 182-residue protein sequence, read N- to C-terminus: Meiotically up-regulated gene 82 protein (182 aa).

The disordered stretch occupies residues 161 to 182 (EKRLSEKKYKQKKKTQRRITMD). Basic residues predominate over residues 169-182 (YKQKKKTQRRITMD).

The protein belongs to the prokaryotic/mitochondrial release factor family.

The protein localises to the mitochondrion. Functionally, has a role in meiosis. The sequence is that of Meiotically up-regulated gene 82 protein (mug82) from Schizosaccharomyces pombe (strain 972 / ATCC 24843) (Fission yeast).